The chain runs to 389 residues: Alkanesulfonate monooxygenase (389 aa).

The protein belongs to the SsuD family.

It catalyses the reaction an alkanesulfonate + FMNH2 + O2 = an aldehyde + FMN + sulfite + H2O + 2 H(+). Functionally, catalyzes the desulfonation of aliphatic sulfonates. The sequence is that of Alkanesulfonate monooxygenase from Variovorax paradoxus (strain S110).